The sequence spans 391 residues: Probable chaperonin-like protein PrmG (391 aa).

Residues 153–191 (TTRWSVRSSPPPSNTSARTASSPPRRATHSGCRSRSSTA) are disordered. Residues 154-174 (TRWSVRSSPPPSNTSARTASS) are compositionally biased toward polar residues.

It belongs to the chaperonin (HSP60) family.

In terms of biological role, probably plays an essential role in the productive folding of PrmA and PrmC, and thus in the formation of the active PrmABCD complex. The polypeptide is Probable chaperonin-like protein PrmG (Gordonia sp. (strain TY-5)).